The primary structure comprises 277 residues: MPQPMKLDPLSNTFKHALAGGRPQIGLWLGLADPYCAEICAGAGFDWLLIDGEHAPNDVRSTLAQLQALAAYPVAPVVRPPVGDTHLIKQYLDLGVQTLLVPMVDTPEQARQLVQATRYPPQGIRGVGSALARASRWNAVPDYLTRANDEICLLVQVESRLGLENLDEIAAVEGVDGVFIGPADLSASLGHLGHPGHPDVAQAIEDALRRIVGAGKAAGILSADERLARHYLALGATFVAVGVDTTLLARAARTLAASFKDKSREEAEPEPQGGSVY.

The active-site Proton acceptor is the His-54. 2 residues coordinate a divalent metal cation: Glu-158 and Asp-184.

It belongs to the HpcH/HpaI aldolase family. A divalent metal cation is required as a cofactor.

It catalyses the reaction D-glyceraldehyde + 3-hydroxypyruvate = (3R,4S,5R)-3,4,5,6-tetrahydroxy-2-oxohexanoate. The enzyme catalyses D-glyceraldehyde + 3-hydroxypyruvate = 2-dehydro-D-gluconate. It carries out the reaction D-glyceraldehyde + 3-hydroxypyruvate = 2-dehydro-D-galactonate. The catalysed reaction is D-glyceraldehyde + pyruvate = 2-dehydro-3-deoxy-L-galactonate. Aldolase which can catalyze in vitro the aldolisation reaction between hydroxypyruvate (HPA) or pyruvate (PA) and D-glyceraldehyde (D-GA). The condensation of hydroxypyruvate and D-glyceraldehyde produces (3R,4S,5R)-3,4,5,6-tetrahydroxy-2-oxohexanoate as the major product, 2-dehydro-D-gluconate and 2-dehydro-D-galactonate. The condensation of pyruvate and D-glyceraldehyde produces 2-dehydro-3-deoxy-L-galactonate as the major product. This chain is Hydroxypyruvate/pyruvate aldolase, found in Deinococcus radiodurans (strain ATCC 13939 / DSM 20539 / JCM 16871 / CCUG 27074 / LMG 4051 / NBRC 15346 / NCIMB 9279 / VKM B-1422 / R1).